We begin with the raw amino-acid sequence, 159 residues long: Phosphopantetheine adenylyltransferase (159 aa).

Ser-9 provides a ligand contact to substrate. ATP is bound by residues 9 to 10 (SF) and His-17. Positions 41, 73, and 87 each coordinate substrate. ATP contacts are provided by residues 88–90 (GLR), Glu-98, and 122–128 (YSFLSSS).

The protein belongs to the bacterial CoaD family. Homohexamer. It depends on Mg(2+) as a cofactor.

The protein resides in the cytoplasm. The enzyme catalyses (R)-4'-phosphopantetheine + ATP + H(+) = 3'-dephospho-CoA + diphosphate. The protein operates within cofactor biosynthesis; coenzyme A biosynthesis; CoA from (R)-pantothenate: step 4/5. Reversibly transfers an adenylyl group from ATP to 4'-phosphopantetheine, yielding dephospho-CoA (dPCoA) and pyrophosphate. In Streptomyces griseus subsp. griseus (strain JCM 4626 / CBS 651.72 / NBRC 13350 / KCC S-0626 / ISP 5235), this protein is Phosphopantetheine adenylyltransferase.